The primary structure comprises 485 residues: Glutamyl-tRNA(Gln) amidotransferase subunit A (485 aa).

Catalysis depends on charge relay system residues lysine 79 and serine 154. The Acyl-ester intermediate role is filled by serine 178.

The protein belongs to the amidase family. GatA subfamily. As to quaternary structure, heterotrimer of A, B and C subunits.

It catalyses the reaction L-glutamyl-tRNA(Gln) + L-glutamine + ATP + H2O = L-glutaminyl-tRNA(Gln) + L-glutamate + ADP + phosphate + H(+). In terms of biological role, allows the formation of correctly charged Gln-tRNA(Gln) through the transamidation of misacylated Glu-tRNA(Gln) in organisms which lack glutaminyl-tRNA synthetase. The reaction takes place in the presence of glutamine and ATP through an activated gamma-phospho-Glu-tRNA(Gln). This is Glutamyl-tRNA(Gln) amidotransferase subunit A from Geobacillus kaustophilus (strain HTA426).